We begin with the raw amino-acid sequence, 706 residues long: G2/M phase-specific E3 ubiquitin-protein ligase (706 aa).

The C2HC pre-PHD-type zinc-finger motif lies at 11–51 (NLACVFCRKHDDCPNKYGEKKTKEKWNLTVHYYCLLMSSGI). A PHD-type 1 zinc finger spans residues 79–128 (LKCCVCKKNGASIGCVAPRCKRSYHFPCGLQRECIFQFTGNFASFCWDHR). The segment at 143-193 (PCTICLEFIEPIPSYNILRSPCCKNAWFHRDCLQVQAINAGVFFFRCTICN) adopts a PHD-type 2; degenerate zinc-finger fold. A PHD-type 3 zinc finger spans residues 237–286 (RCRCKEGRDYNAPDSKWEIKRCQCCGSSGTHLACSSLRSWEQNWECLECR). The HECT domain occupies 371–698 (IWNSALDAFR…IRNTLRLEKE (328 aa)).

In terms of tissue distribution, predominantly expressed in brain, liver, kidney, testes and ovary.

The protein localises to the nucleus. The protein resides in the nucleolus. It localises to the cytoplasm. The enzyme catalyses S-ubiquitinyl-[E2 ubiquitin-conjugating enzyme]-L-cysteine + [acceptor protein]-L-lysine = [E2 ubiquitin-conjugating enzyme]-L-cysteine + N(6)-ubiquitinyl-[acceptor protein]-L-lysine.. It participates in protein modification; protein ubiquitination. In terms of biological role, E3 ubiquitin-protein ligase which accepts ubiquitin from an E2 ubiquitin-conjugating enzyme in the form of a thioester and then directly transfers the ubiquitin to targeted substrates. Essential in early embryonic development to prevent apoptotic death. This chain is G2/M phase-specific E3 ubiquitin-protein ligase (G2E3), found in Homo sapiens (Human).